Reading from the N-terminus, the 111-residue chain is Large ribosomal subunit protein uL22 (111 aa).

This sequence belongs to the universal ribosomal protein uL22 family. In terms of assembly, part of the 50S ribosomal subunit.

Functionally, this protein binds specifically to 23S rRNA; its binding is stimulated by other ribosomal proteins, e.g. L4, L17, and L20. It is important during the early stages of 50S assembly. It makes multiple contacts with different domains of the 23S rRNA in the assembled 50S subunit and ribosome. The globular domain of the protein is located near the polypeptide exit tunnel on the outside of the subunit, while an extended beta-hairpin is found that lines the wall of the exit tunnel in the center of the 70S ribosome. The chain is Large ribosomal subunit protein uL22 from Wigglesworthia glossinidia brevipalpis.